Here is a 1225-residue protein sequence, read N- to C-terminus: DNA-directed RNA polymerase subunit beta' (1225 aa).

Zn(2+) contacts are provided by Cys-60, Cys-62, Cys-75, and Cys-78. Residues Asp-450, Asp-452, and Asp-454 each contribute to the Mg(2+) site. Zn(2+) contacts are provided by Cys-818, Cys-892, Cys-899, and Cys-902.

Belongs to the RNA polymerase beta' chain family. The RNAP catalytic core consists of 2 alpha, 1 beta, 1 beta' and 1 omega subunit. When a sigma factor is associated with the core the holoenzyme is formed, which can initiate transcription. The cofactor is Mg(2+). Requires Zn(2+) as cofactor.

The catalysed reaction is RNA(n) + a ribonucleoside 5'-triphosphate = RNA(n+1) + diphosphate. In terms of biological role, DNA-dependent RNA polymerase catalyzes the transcription of DNA into RNA using the four ribonucleoside triphosphates as substrates. This is DNA-directed RNA polymerase subunit beta' from Streptococcus pneumoniae (strain Hungary19A-6).